The sequence spans 434 residues: Lipoyl synthase, mitochondrial (434 aa).

The transit peptide at 1 to 31 directs the protein to the mitochondrion; it reads MAASARGLRTLQSAHSSTTVPRLQLAVSRCY. A compositionally biased stretch (low complexity) spans 34-54; the sequence is TTSPDPPITNSSNSSNSTPTP. The segment at 34 to 55 is disordered; it reads TTSPDPPITNSSNSSNSTPTPK. 7 residues coordinate [4Fe-4S] cluster: C144, C149, C155, C175, C179, C182, and S390. The Radical SAM core domain occupies 158–379; that stretch reads GSSKSAATAT…KERALEMGFL (222 aa).

The protein belongs to the radical SAM superfamily. Lipoyl synthase family. It depends on [4Fe-4S] cluster as a cofactor.

The protein resides in the mitochondrion. It catalyses the reaction [[Fe-S] cluster scaffold protein carrying a second [4Fe-4S](2+) cluster] + N(6)-octanoyl-L-lysyl-[protein] + 2 oxidized [2Fe-2S]-[ferredoxin] + 2 S-adenosyl-L-methionine + 4 H(+) = [[Fe-S] cluster scaffold protein] + N(6)-[(R)-dihydrolipoyl]-L-lysyl-[protein] + 4 Fe(3+) + 2 hydrogen sulfide + 2 5'-deoxyadenosine + 2 L-methionine + 2 reduced [2Fe-2S]-[ferredoxin]. It functions in the pathway protein modification; protein lipoylation via endogenous pathway; protein N(6)-(lipoyl)lysine from octanoyl-[acyl-carrier-protein]: step 2/2. Functionally, catalyzes the radical-mediated insertion of two sulfur atoms into the C-6 and C-8 positions of the octanoyl moiety bound to the lipoyl domains of lipoate-dependent enzymes, thereby converting the octanoylated domains into lipoylated derivatives. The sequence is that of Lipoyl synthase, mitochondrial from Paracoccidioides brasiliensis (strain Pb03).